Here is a 162-residue protein sequence, read N- to C-terminus: Cyclic pyranopterin monophosphate synthase (162 aa).

Substrate is bound by residues 75 to 77 (LCH) and 113 to 114 (ME). Residue Asp-128 is part of the active site.

This sequence belongs to the MoaC family. Homohexamer; trimer of dimers.

It carries out the reaction (8S)-3',8-cyclo-7,8-dihydroguanosine 5'-triphosphate = cyclic pyranopterin phosphate + diphosphate. Its pathway is cofactor biosynthesis; molybdopterin biosynthesis. Catalyzes the conversion of (8S)-3',8-cyclo-7,8-dihydroguanosine 5'-triphosphate to cyclic pyranopterin monophosphate (cPMP). This Burkholderia orbicola (strain MC0-3) protein is Cyclic pyranopterin monophosphate synthase.